The following is a 23-amino-acid chain: Cysteine proteinase (23 aa).

A compositionally biased stretch (basic and acidic residues) spans 1–10 (ADSLDWREKG). Positions 1–23 (ADSLDWREKGVVNSIKDQAQXGS) are disordered.

Belongs to the peptidase C1 family.

The protein is Cysteine proteinase of Tritrichomonas foetus (Trichomonas foetus).